A 113-amino-acid chain; its full sequence is U11-theraphotoxin-Hhn1f (113 aa).

An N-terminal signal peptide occupies residues 1–21 (MNTVRVTFLLVFVLAVSLGQA). Positions 22–74 (DKDENRMEMQEKTEQGKSYLDFAENLLLQKLEELEAKLLEEDSEESRNSRQKR) are excised as a propeptide. The tract at residues 61-83 (EEDSEESRNSRQKRCIGEGVPCD) is disordered. Cystine bridges form between C75-C90, C82-C95, and C89-C110.

Belongs to the neurotoxin 14 (magi-1) family. 01 (HNTX-16) subfamily. In terms of tissue distribution, expressed by the venom gland.

The protein resides in the secreted. Functionally, probable ion channel inhibitor. The polypeptide is U11-theraphotoxin-Hhn1f (Cyriopagopus hainanus (Chinese bird spider)).